A 339-amino-acid polypeptide reads, in one-letter code: Lipoate-protein ligase A (339 aa).

One can recognise a BPL/LPL catalytic domain in the interval 29–217 (PKKQSILFLW…AFFQHYGMKV (189 aa)). Residues Arg-71, 76 to 79 (GAVF), and Lys-135 each bind ATP. Lys-135 contacts (R)-lipoate.

This sequence belongs to the LplA family. As to quaternary structure, monomer.

The protein resides in the cytoplasm. It carries out the reaction L-lysyl-[lipoyl-carrier protein] + (R)-lipoate + ATP = N(6)-[(R)-lipoyl]-L-lysyl-[lipoyl-carrier protein] + AMP + diphosphate + H(+). The protein operates within protein modification; protein lipoylation via exogenous pathway; protein N(6)-(lipoyl)lysine from lipoate: step 1/2. Its pathway is protein modification; protein lipoylation via exogenous pathway; protein N(6)-(lipoyl)lysine from lipoate: step 2/2. In terms of biological role, catalyzes both the ATP-dependent activation of exogenously supplied lipoate to lipoyl-AMP and the transfer of the activated lipoyl onto the lipoyl domains of lipoate-dependent enzymes. The protein is Lipoate-protein ligase A of Blochmanniella pennsylvanica (strain BPEN).